Reading from the N-terminus, the 284-residue chain is uncharacterized protein (284 aa).

Composition is skewed to low complexity over residues 110-123 and 130-149; these read NGPR…PNNG and NGPM…NGPN. Residues 110–176 are disordered; that stretch reads NGPRGRQMNG…PNEFDSDDDD (67 aa).

It is found in the virion. This is an uncharacterized protein from Acanthamoeba polyphaga mimivirus (APMV).